We begin with the raw amino-acid sequence, 204 residues long: Thiamine-phosphate synthase (204 aa).

Residues 32-36 (QLRMK) and aspartate 64 each bind 4-amino-2-methyl-5-(diphosphooxymethyl)pyrimidine. Residues aspartate 65 and aspartate 84 each contribute to the Mg(2+) site. Threonine 103 is a 4-amino-2-methyl-5-(diphosphooxymethyl)pyrimidine binding site. 2-[(2R,5Z)-2-carboxy-4-methylthiazol-5(2H)-ylidene]ethyl phosphate is bound at residue 129–131 (TTT). Lysine 132 contacts 4-amino-2-methyl-5-(diphosphooxymethyl)pyrimidine. A 2-[(2R,5Z)-2-carboxy-4-methylthiazol-5(2H)-ylidene]ethyl phosphate-binding site is contributed by glycine 165.

This sequence belongs to the thiamine-phosphate synthase family. Mg(2+) serves as cofactor.

It catalyses the reaction 2-[(2R,5Z)-2-carboxy-4-methylthiazol-5(2H)-ylidene]ethyl phosphate + 4-amino-2-methyl-5-(diphosphooxymethyl)pyrimidine + 2 H(+) = thiamine phosphate + CO2 + diphosphate. The enzyme catalyses 2-(2-carboxy-4-methylthiazol-5-yl)ethyl phosphate + 4-amino-2-methyl-5-(diphosphooxymethyl)pyrimidine + 2 H(+) = thiamine phosphate + CO2 + diphosphate. It carries out the reaction 4-methyl-5-(2-phosphooxyethyl)-thiazole + 4-amino-2-methyl-5-(diphosphooxymethyl)pyrimidine + H(+) = thiamine phosphate + diphosphate. Its pathway is cofactor biosynthesis; thiamine diphosphate biosynthesis; thiamine phosphate from 4-amino-2-methyl-5-diphosphomethylpyrimidine and 4-methyl-5-(2-phosphoethyl)-thiazole: step 1/1. Functionally, condenses 4-methyl-5-(beta-hydroxyethyl)thiazole monophosphate (THZ-P) and 2-methyl-4-amino-5-hydroxymethyl pyrimidine pyrophosphate (HMP-PP) to form thiamine monophosphate (TMP). This chain is Thiamine-phosphate synthase, found in Bacteroides fragilis (strain ATCC 25285 / DSM 2151 / CCUG 4856 / JCM 11019 / LMG 10263 / NCTC 9343 / Onslow / VPI 2553 / EN-2).